The sequence spans 669 residues: Gametogenetin-binding protein 2 (669 aa).

Disordered regions lie at residues 375-421 and 452-475; these read QEKK…GNPC and PHSN…SQEG. A compositionally biased stretch (basic residues) spans 376-388; the sequence is EKKRQKKNRKKNK. Residues 398 to 408 show a composition bias toward polar residues; that stretch reads ETKSANPSQKN.

It is found in the cytoplasm. In terms of biological role, may be involved in spermatogenesis. This Xenopus tropicalis (Western clawed frog) protein is Gametogenetin-binding protein 2 (ggnbp2).